A 248-amino-acid chain; its full sequence is tRNA (guanine-N(7)-)-methyltransferase (248 aa).

S-adenosyl-L-methionine-binding residues include Glu80, Glu105, Asp132, and Asp155. Asp155 is a catalytic residue. Substrate is bound by residues Lys159, Asp191, and 223 to 226; that span reads TKFE.

Belongs to the class I-like SAM-binding methyltransferase superfamily. TrmB family.

The enzyme catalyses guanosine(46) in tRNA + S-adenosyl-L-methionine = N(7)-methylguanosine(46) in tRNA + S-adenosyl-L-homocysteine. It functions in the pathway tRNA modification; N(7)-methylguanine-tRNA biosynthesis. In terms of biological role, catalyzes the formation of N(7)-methylguanine at position 46 (m7G46) in tRNA. In Nocardioides sp. (strain ATCC BAA-499 / JS614), this protein is tRNA (guanine-N(7)-)-methyltransferase.